The following is a 124-amino-acid chain: MSGSSSQFSPGKLVPGAINFASGEIVMNEGREAKVISIKNTGDRPIQVGSHFHLFEVNSALVFFDEKGNEDKERKVAYGRRFDIPSGTAIRFEPGDKKEVSIIDLAGTREVWGVNGLVNGKLKK.

It belongs to the urease beta subunit family. Heterotrimer of UreA (gamma), UreB (beta) and UreC (alpha) subunits. Three heterotrimers associate to form the active enzyme.

It is found in the cytoplasm. The catalysed reaction is urea + 2 H2O + H(+) = hydrogencarbonate + 2 NH4(+). It participates in nitrogen metabolism; urea degradation; CO(2) and NH(3) from urea (urease route): step 1/1. This chain is Urease subunit beta, found in Ureaplasma parvum serovar 3 (strain ATCC 27815 / 27 / NCTC 11736).